A 385-amino-acid polypeptide reads, in one-letter code: Glutamate 5-kinase (385 aa).

Lys-18 serves as a coordination point for ATP. Substrate-binding residues include Ser-57, Asp-144, and Asn-156. 218–224 (TGGMKSK) contacts ATP. The 79-residue stretch at 283–361 (RGVLSIDAGA…SRIEQVLGHK (79 aa)) folds into the PUA domain.

Belongs to the glutamate 5-kinase family.

The protein localises to the cytoplasm. The enzyme catalyses L-glutamate + ATP = L-glutamyl 5-phosphate + ADP. Its pathway is amino-acid biosynthesis; L-proline biosynthesis; L-glutamate 5-semialdehyde from L-glutamate: step 1/2. Its function is as follows. Catalyzes the transfer of a phosphate group to glutamate to form L-glutamate 5-phosphate. The protein is Glutamate 5-kinase of Syntrophus aciditrophicus (strain SB).